The following is a 300-amino-acid chain: GTPase Era (300 aa).

Residues 5-176 (RSGFVCLIGR…IDVLAAALPP (172 aa)) form the Era-type G domain. The interval 13 to 20 (GRPNTGKS) is G1. 13–20 (GRPNTGKS) serves as a coordination point for GTP. Residues 39-43 (QTTRH) form a G2 region. The tract at residues 61–64 (DTPG) is G3. Residues 61-65 (DTPGL) and 125-128 (TKID) each bind GTP. The interval 125-128 (TKID) is G4. The segment at 155-157 (VSA) is G5. Residues 207–286 (VHDELPHSLA…YLDLHVNVAK (80 aa)) form the KH type-2 domain.

It belongs to the TRAFAC class TrmE-Era-EngA-EngB-Septin-like GTPase superfamily. Era GTPase family. Monomer.

It is found in the cell envelope. The protein resides in the secreted. It localises to the cell wall. In terms of biological role, exhibits GTPase activity. Binds RNA but is probably not involved in ribosome assembly in mycobacteria. The sequence is that of GTPase Era from Mycobacterium leprae (strain TN).